Here is a 62-residue protein sequence, read N- to C-terminus: Protein CYSTEINE-RICH TRANSMEMBRANE MODULE 2 (62 aa).

2 helical membrane-spanning segments follow: residues 23 to 39 (VAVA…AAFD) and 33 to 53 (VVAA…LSLI).

The protein belongs to the CYSTM1 family. Heterodimers. Binds weakly to CYSTM7 and WIH1/CYSTM13. Mostly expressed in stems, siliques, leaves and flowers and, to a lower extent, in roots.

Its subcellular location is the cell membrane. The protein resides in the nucleus. The protein localises to the secreted. It localises to the cell wall. Functionally, involved in resistance to abiotic stress. In terms of biological role, confers resistance to heavy metal ions (e.g. cadmium (CdCl(2)) and copper (CuCl(2))) by chelating them at the plasma membrane of root cells, thus stopping their entry and reducing their accumulation. The chain is Protein CYSTEINE-RICH TRANSMEMBRANE MODULE 2 from Arabidopsis thaliana (Mouse-ear cress).